The primary structure comprises 321 residues: Ribosomal RNA small subunit methyltransferase H (321 aa).

Residues 44 to 46, Asp-64, Phe-88, Asp-109, and Gln-116 contribute to the S-adenosyl-L-methionine site; that span reads GGH.

It belongs to the methyltransferase superfamily. RsmH family.

The protein resides in the cytoplasm. It carries out the reaction cytidine(1402) in 16S rRNA + S-adenosyl-L-methionine = N(4)-methylcytidine(1402) in 16S rRNA + S-adenosyl-L-homocysteine + H(+). Functionally, specifically methylates the N4 position of cytidine in position 1402 (C1402) of 16S rRNA. This chain is Ribosomal RNA small subunit methyltransferase H, found in Methylobacillus flagellatus (strain ATCC 51484 / DSM 6875 / VKM B-1610 / KT).